We begin with the raw amino-acid sequence, 148 residues long: MNATWVDQRGAWIIHVVVITLLKLFFNLFPGVTAEWSWTLTNMTYVVGSYVMFHLIKGTPFDFNGGAYDNLTMWEQIDDETLFTPSRKFLIIVPIALFLVSTHYAHYDLKMFSWNCFLTTFVAVVPKLPVTHRLRISIPGITGRAQIS.

4 consecutive transmembrane segments (helical) span residues 12–32 (WIIH…FPGV), 36–56 (WSWT…FHLI), 89–109 (FLII…HYDL), and 111–131 (MFSW…LPVT).

This sequence to yeast YLR350W C-terminus.

It localises to the membrane. The protein is Protein ORM1 (ORM1) of Saccharomyces pastorianus (strain ATCC 76670 / Carlsberg bottom yeast no.2 / CBS 1503 / CLIB 180 / NBRC 10610 / NRRL Y-1525) (Saaz-type lager yeast).